A 1154-amino-acid chain; its full sequence is MLDLTNFDRIRIGLASADHITTWSHGEVKKPETINYRTLKPERDGLFCERIFGPTRDWECYCGKYKRVRYKGIVCDRCGVEVTRSKVRRERLGHIKLAAPVSHIWYFKGIPSRMGLLLDMSPRALEKVLYFVSYIVTNPGDTPLFKKQLLTEQEYREFRDKYGTDFQAAMGAEAILQLLDEIDLNELAAELRQEIRDVTGQRRIRAIRRLEVVESFRKSQNSPSWMIMQVLPVIPPELRPMVQLDGGRFATSDLNDLYRRVINRNNRLKRLLELGAPDIIVRNEKRMLQEAVDALIDNGRRGRPVTGPGNRPLKSLSDMLKGKQGRFRQNLLGKRVDYSGRSVIVVGPSLKLHQCGLPKEMALELFKPFVMKRLVGDGHAHNIKSAKRKVERVRPEVWDVLEDVIKEHPVLLNRAPTLHRLGIQAFEPVLVEGRAIQIHPLVCTAYNADFDGDQMAVHVPLSAEAQAEARLLMLSTYNILNPKDGRPVTIPTQDMVLGIYYLTIERPGARGEGKAFRDVNEAILAYESGVIELHALVKVNMGDGRLLETTVGRLIFNEAMPPEISYINKLVDKKELSLIVDRCYRRLGYKRTAELLDGIKQLGFKYATQGGLTIGMNDIVIPERKKEILGEAESHVEMIEDQYRRGLITFDEKYRQTIETWNRATELVTQELLNTLDRFNPVYMMATSGARGNIQQIRQLAGLRGLMADPSGRIIDLPIKANFREGLSVLEYFISTHGARKGLADTALRTADSGYLTRRLVDVAQDVIVREIDCGTDEYVEVGDVRDGTEIIEMLQDRIVGRTAARAIVHPETGAVIVDADEEILEEAAEKIVAAGIKKVAIRSVFTCKTRHGVCKKCYGRNLATGRVVDIGEAIGIIAAQSIGEPGTQLTMRTFHTGGVAGEDITQGLPRVEELFEARRPKGQAIVAEIDGLVEVREVKGRREIEIRGENGERVQYAIPFGARLKVQNGDRVEAGDELSEGSVNPHDLLKIKGPAAVQQYLLREVQRVYRMQGVDINDKHIEVVIRQMLRKVKIDEPGDTEFLPGSLVDILDLEEENRRVEAAGGSPATSKSVLLGITKASLATDSFLSAASFQETTRVLTEAAIKGKVDPLLGLKENVIIGKLIPAGTGMNRYRSVEVDPAVETPAKEVPTH.

The Zn(2+) site is built by Cys-60, Cys-62, Cys-75, and Cys-78. Mg(2+)-binding residues include Asp-449, Asp-451, and Asp-453. Residues Cys-774, Cys-848, Cys-855, and Cys-858 each contribute to the Zn(2+) site.

The protein belongs to the RNA polymerase beta' chain family. As to quaternary structure, the RNAP catalytic core consists of 2 alpha, 1 beta, 1 beta' and 1 omega subunit. When a sigma factor is associated with the core the holoenzyme is formed, which can initiate transcription. The cofactor is Mg(2+). Requires Zn(2+) as cofactor.

It carries out the reaction RNA(n) + a ribonucleoside 5'-triphosphate = RNA(n+1) + diphosphate. In terms of biological role, DNA-dependent RNA polymerase catalyzes the transcription of DNA into RNA using the four ribonucleoside triphosphates as substrates. The chain is DNA-directed RNA polymerase subunit beta' from Desulforudis audaxviator (strain MP104C).